Consider the following 938-residue polypeptide: Isoleucine--tRNA ligase (938 aa).

Positions 58-68 match the 'HIGH' region motif; it reads PYANGHLHMGH. Position 566 (Glu566) interacts with L-isoleucyl-5'-AMP. The 'KMSKS' region motif lies at 607-611; the sequence is KMSKS. Lys610 contributes to the ATP binding site. Zn(2+)-binding residues include Cys906, Cys909, Cys926, and Cys929.

It belongs to the class-I aminoacyl-tRNA synthetase family. IleS type 1 subfamily. As to quaternary structure, monomer. Zn(2+) serves as cofactor.

It localises to the cytoplasm. It carries out the reaction tRNA(Ile) + L-isoleucine + ATP = L-isoleucyl-tRNA(Ile) + AMP + diphosphate. In terms of biological role, catalyzes the attachment of isoleucine to tRNA(Ile). As IleRS can inadvertently accommodate and process structurally similar amino acids such as valine, to avoid such errors it has two additional distinct tRNA(Ile)-dependent editing activities. One activity is designated as 'pretransfer' editing and involves the hydrolysis of activated Val-AMP. The other activity is designated 'posttransfer' editing and involves deacylation of mischarged Val-tRNA(Ile). The sequence is that of Isoleucine--tRNA ligase from Desulfovibrio desulfuricans (strain ATCC 27774 / DSM 6949 / MB).